Here is a 534-residue protein sequence, read N- to C-terminus: Beta-glucosidase 31 (534 aa).

A signal peptide spans 1–22; that stretch reads MAIKLIALVITLCVASWDVAQG. Gln51 is an a beta-D-glucoside binding site. Asn68 is a glycosylation site (N-linked (GlcNAc...) asparagine). A beta-D-glucoside is bound by residues His154 and 199-200; that span reads NE. Residue Glu200 is the Proton donor of the active site. Cys219 and Cys227 are oxidised to a cystine. Tyr344 contributes to the a beta-D-glucoside binding site. Asn374 carries an N-linked (GlcNAc...) asparagine glycan. Position 417 (Glu417) interacts with a beta-D-glucoside. Glu417 acts as the Nucleophile in catalysis. The N-linked (GlcNAc...) asparagine glycan is linked to Asn425. A beta-D-glucoside is bound by residues Trp467, 474–475, and Phe483; that span reads EW.

It belongs to the glycosyl hydrolase 1 family.

The enzyme catalyses Hydrolysis of terminal, non-reducing beta-D-glucosyl residues with release of beta-D-glucose.. The sequence is that of Beta-glucosidase 31 from Arabidopsis thaliana (Mouse-ear cress).